A 959-amino-acid polypeptide reads, in one-letter code: Bifunctional premutilin synthase (959 aa).

The interval 1 to 542 (MGLSEDLHAR…ALNVPIPRFD (542 aa)) is class II diterpene cyclase. The DXDD motif motif lies at 309-312 (DADM). Aspartate 311 functions as the For class II diterpene cyclase activity in the catalytic mechanism. Positions 543–959 (PASITTLPPI…TANGSNGIHH (417 aa)) are class I diterpene synthase. Aspartate 649 serves as the catalytic For class I diterpene synthase activity. The Mg(2+) site is built by aspartate 649, aspartate 653, and asparagine 824. The DDXXD motif signature appears at 649–653 (DDYLD). The segment at 931-959 (KGANGVKKTNGLTTNGTKATANGSNGIHH) is disordered. The segment covering 934–959 (NGVKKTNGLTTNGTKATANGSNGIHH) has biased composition (low complexity).

This sequence belongs to the terpene synthase family. Requires Mg(2+) as cofactor.

The protein operates within secondary metabolite biosynthesis; terpenoid biosynthesis. Its function is as follows. Bifunctional premutilin synthase; part of the gene cluster that mediates the biosynthesis of pleuromutilin, a tricyclic diterpene showing antibacterial properties. The geranylgeranyl diphosphate (GGPP) synthase ple4 catalyzes the first step in pleuromutilin biosynthesis. GGPP is then substrate of the premutilin synthase (PS) ple3 to yield premutilin. Premutilin synthase is a bifunctional enzyme composed of the fusion of a class II diterpene cyclase (DTC) and a class I diterpene synthase (DTS), with the corresponding domains and active sites containing characteristic aspartate-rich motifs. GGPP is first converted to mutildienyl-diphosphate (MPP) at the class II DTC site. MPP is subsequently further cyclized at the class I DTS site, followed by a 1,5-hydride shift and addition of water prior to terminating deprotonation, to yield premutilin. The cytochrome P450 monooxygenases ple5 and ple6 hydroxylate premutilin at C-11 and C-3, respectively, producing 11-hydroxypremutilin and 3-hydroxypremutilin. The combination of the actions of both ple5 and ple6 leads to the production of 3,11-dihydroxypremutilin. The short chain dehydrogenase ple7 further converts 3,11-dihydroxypremutilin into mutilin. The acetyltransferase ple2 then acetylates mutilin to produce 14-O-acetylmutilin. Finally, the cytochrome P450 monooxygenase ple1 catalyzes hydroxylation on the alpha position of the acetyl side chain of 14-O-acetylmutilin to yield pleuromutilin. In Rhodocybe pseudopiperita (Clitopilus pseudopiperitus), this protein is Bifunctional premutilin synthase.